Reading from the N-terminus, the 408-residue chain is PTI1-like tyrosine-protein kinase 3 (408 aa).

Residues 59-76 (SSENEHLRSPKHHNDFGH) show a composition bias toward basic and acidic residues. The interval 59–91 (SSENEHLRSPKHHNDFGHHTRKPQAAVKPDALK) is disordered. The 283-residue stretch at 113-395 (FGSKSLIGEG…IVVKALQPLL (283 aa)) folds into the Protein kinase domain. ATP-binding positions include 119 to 127 (IGEGSYGRA) and lysine 141. The active-site Proton acceptor is the aspartate 245.

Belongs to the protein kinase superfamily. Tyr protein kinase family. In terms of assembly, interacts with OXI1. Post-translationally, phosphorylated by OXI1.

It is found in the cell membrane. It carries out the reaction L-tyrosyl-[protein] + ATP = O-phospho-L-tyrosyl-[protein] + ADP + H(+). The protein is PTI1-like tyrosine-protein kinase 3 (PTI13) of Arabidopsis thaliana (Mouse-ear cress).